Here is a 1023-residue protein sequence, read N- to C-terminus: DNA polymerase (1023 aa).

The interval 726–751 (QTDATRKHRQCTPTSNSSSDEDAPFY) is disordered.

The protein belongs to the DNA polymerase type-B family. As to quaternary structure, heterodimer with the terminal protein; this heterodimer binds to bp 9 to 18 of the genome. Forms a complex with viral pTP, DBP and hosts NFIA and POU2F1/OCT1 for initiation of replication.

The protein localises to the host nucleus. The enzyme catalyses DNA(n) + a 2'-deoxyribonucleoside 5'-triphosphate = DNA(n+1) + diphosphate. In terms of biological role, eukaryotic-type DNA polymerase involved in viral genomic replication. DNA synthesis is protein primed, and acts in a strand displacement replication. Assembles in complex with viral pTP, DBP, host NFIA and host POU2F1/OCT1 on viral origin of replication. The polymerase covalently transfers dCMP onto pTP, thereby initiating complementary strand synthesis. The sequence is that of DNA polymerase from Bovine adenovirus B serotype 3 (BAdV-3).